A 199-amino-acid polypeptide reads, in one-letter code: NAD(P)H dehydrogenase (quinone) (199 aa).

The region spanning 4 to 190 is the Flavodoxin-like domain; that stretch reads ILVLYYSMYG…AIARFQGEHV (187 aa). Residues 10–15 and 79–81 contribute to the FMN site; these read SMYGHI and TRF. An NAD(+)-binding site is contributed by Tyr-12. Trp-99 provides a ligand contact to substrate. Residues 114–119 and His-134 each bind FMN; that span reads STGTGG.

The protein belongs to the WrbA family. FMN serves as cofactor.

It carries out the reaction a quinone + NADH + H(+) = a quinol + NAD(+). The enzyme catalyses a quinone + NADPH + H(+) = a quinol + NADP(+). In Yersinia pseudotuberculosis serotype O:1b (strain IP 31758), this protein is NAD(P)H dehydrogenase (quinone).